A 147-amino-acid chain; its full sequence is Ribosome-binding factor A (147 aa).

The tract at residues 127-147 (AAEARHAGEPDPYKTDRDDAE) is disordered.

The protein belongs to the RbfA family. Monomer. Binds 30S ribosomal subunits, but not 50S ribosomal subunits or 70S ribosomes.

It is found in the cytoplasm. One of several proteins that assist in the late maturation steps of the functional core of the 30S ribosomal subunit. Associates with free 30S ribosomal subunits (but not with 30S subunits that are part of 70S ribosomes or polysomes). Required for efficient processing of 16S rRNA. May interact with the 5'-terminal helix region of 16S rRNA. The chain is Ribosome-binding factor A from Nocardia farcinica (strain IFM 10152).